The primary structure comprises 211 residues: Uracil phosphoribosyltransferase (211 aa).

5-phospho-alpha-D-ribose 1-diphosphate-binding positions include Arg77, Arg102, and 129–137 (DPMLATGGS). Residues Ile192 and 197–199 (GDA) contribute to the uracil site. Asp198 is a 5-phospho-alpha-D-ribose 1-diphosphate binding site.

The protein belongs to the UPRTase family. It depends on Mg(2+) as a cofactor.

The catalysed reaction is UMP + diphosphate = 5-phospho-alpha-D-ribose 1-diphosphate + uracil. Its pathway is pyrimidine metabolism; UMP biosynthesis via salvage pathway; UMP from uracil: step 1/1. Allosterically activated by GTP. In terms of biological role, catalyzes the conversion of uracil and 5-phospho-alpha-D-ribose 1-diphosphate (PRPP) to UMP and diphosphate. The polypeptide is Uracil phosphoribosyltransferase (Corynebacterium aurimucosum (strain ATCC 700975 / DSM 44827 / CIP 107346 / CN-1) (Corynebacterium nigricans)).